The primary structure comprises 417 residues: Argininosuccinate synthase (417 aa).

Residue 9 to 17 participates in ATP binding; the sequence is AYSGGLDTS. Tyr-87 lines the L-citrulline pocket. An ATP-binding site is contributed by Gly-117. L-aspartate contacts are provided by Thr-119, Asn-123, and Asp-124. Asn-123 provides a ligand contact to L-citrulline. Arg-127, Ser-175, Ser-184, Glu-260, and Tyr-272 together coordinate L-citrulline.

This sequence belongs to the argininosuccinate synthase family. Type 1 subfamily. In terms of assembly, homotetramer.

The protein resides in the cytoplasm. It catalyses the reaction L-citrulline + L-aspartate + ATP = 2-(N(omega)-L-arginino)succinate + AMP + diphosphate + H(+). The protein operates within amino-acid biosynthesis; L-arginine biosynthesis; L-arginine from L-ornithine and carbamoyl phosphate: step 2/3. The protein is Argininosuccinate synthase of Oceanobacillus iheyensis (strain DSM 14371 / CIP 107618 / JCM 11309 / KCTC 3954 / HTE831).